We begin with the raw amino-acid sequence, 700 residues long: non-specific serine/threonine protein kinase Cdc7 (700 aa).

The region spanning 127 to 644 (FDVHSRIGNG…AEEALKHPFF (518 aa)) is the Protein kinase domain. Residues 133–141 (IGNGTFSTV) and Lys-163 contribute to the ATP site. The active-site Proton acceptor is the Asp-250.

It belongs to the protein kinase superfamily. Ser/Thr protein kinase family. As to quaternary structure, component of the Dbf4-dependent kinase (DDK) complex consisting of Cdc7 and the Dbf4 ortholog chif. Interacts with chif (via the processed polypeptide Chiffon-A); the interaction is direct.

It catalyses the reaction L-seryl-[protein] + ATP = O-phospho-L-seryl-[protein] + ADP + H(+). The enzyme catalyses L-threonyl-[protein] + ATP = O-phospho-L-threonyl-[protein] + ADP + H(+). Its activity is regulated as follows. Activated by chif. Inhibited by the synthetic compound XL413. Catalytic component of the Dbf4-dependent kinase (DDK) complex. Phosphorylates components of the pre-replication complex, including Mcm2 and, to a lesser extent, Mcm4. Phosphorylates histones, including H3 and H2B. Required for DNA replication and mitotic proliferation, including during the endoreplication and amplification stages of DNA replication in egg chamber follicle cells of the ovary. This chain is non-specific serine/threonine protein kinase Cdc7, found in Drosophila melanogaster (Fruit fly).